A 1360-amino-acid polypeptide reads, in one-letter code: DNA-directed RNA polymerase subunit beta (1360 aa).

This sequence belongs to the RNA polymerase beta chain family. The RNAP catalytic core consists of 2 alpha, 1 beta, 1 beta' and 1 omega subunit. When a sigma factor is associated with the core the holoenzyme is formed, which can initiate transcription.

It catalyses the reaction RNA(n) + a ribonucleoside 5'-triphosphate = RNA(n+1) + diphosphate. Its function is as follows. DNA-dependent RNA polymerase catalyzes the transcription of DNA into RNA using the four ribonucleoside triphosphates as substrates. The protein is DNA-directed RNA polymerase subunit beta of Caulobacter sp. (strain K31).